The primary structure comprises 838 residues: MGELFRSEEMTLAQLFLQSEAAYCCVSELGELGKVQFRDLNPDVNVFQRKFVNEVRRCEEMDRKLRFVEKEIRKANIPIMDTGENPEVPFPRDMIDLEANFEKIENELKEINTNQEALKRNFLELTELKFILRKTQQFFDEMADPDLLEESSSLLEPSEMGRGTPLRLGFVAGVINRERIPTFERMLWRVCRGNVFLRQAEIENPLEDPVTGDYVHKSVFIIFFQGDQLKNRVKKICEGFRASLYPCPETPQERKEMASGVNTRIDDLQMVLNQTEDHRQRVLQAAAKNIRVWFIKVRKMKAIYHTLNLCNIDVTQKCLIAEVWCPVTDLDSIQFALRRGTEHSGSTVPSILNRMQTNQTPPTYNKTNKFTYGFQNIVDAYGIGTYREINPAPYTIITFPFLFAVMFGDLGHGILMTLFAVWMVLKESRILSQKNENEMFSTIFSGRYIILLMGVFSIYTGLIYNDCFSKSLNIFGSSWSVRPMFDIYNWTEETLRGNPVLQLNPAVTGVFGGPYPFGIDPIWNIATNKLTFLNSFKMKMSVILGIIHMLFGVSLSLFNHTYFKKPLNIYFGFIPEIIFMTSLFGYLVILIFYKWTAYNAKTSEKAPSLLIHFINMFLFSYGDSGNSMLYSGQKGIQCFLVVVALLCVPWMLLFKPLVLRRQYLRRKHLGTLNFGGIRVGNGPTEEDAEIIQHDQLSTHSEDAEEPTEDEVFDFGDTMVHQAIHTIEYCLGCISNTASYLRLWALSLAHAQLSEVLWTMVIHIGLKVKSLAGGLALFFIFAAFATLTVAILLIMEGLSAFLHALRLHWVEFQNKFYSGTGFKFLPFSFEHIREGKFDD.

The Cytoplasmic segment spans residues 1–388; sequence MGELFRSEEM…DAYGIGTYRE (388 aa). A phosphothreonine mark is found at Thr250 and Thr360. Residue Tyr364 is modified to Phosphotyrosine. A helical membrane pass occupies residues 389–407; that stretch reads INPAPYTIITFPFLFAVMF. Residues 408–409 lie on the Vacuolar side of the membrane; the sequence is GD. A helical membrane pass occupies residues 410-426; the sequence is LGHGILMTLFAVWMVLK. Residues 427–441 are Cytoplasmic-facing; the sequence is ESRILSQKNENEMFS. The chain crosses the membrane as a helical span at residues 442 to 471; that stretch reads TIFSGRYIILLMGVFSIYTGLIYNDCFSKS. Residues 472-535 lie on the Vacuolar side of the membrane; sequence LNIFGSSWSV…ATNKLTFLNS (64 aa). Residues 536 to 555 traverse the membrane as a helical segment; the sequence is FKMKMSVILGIIHMLFGVSL. Topologically, residues 556–573 are cytoplasmic; sequence SLFNHTYFKKPLNIYFGF. A helical membrane pass occupies residues 574 to 594; it reads IPEIIFMTSLFGYLVILIFYK. At 595-639 the chain is on the vacuolar side; that stretch reads WTAYNAKTSEKAPSLLIHFINMFLFSYGDSGNSMLYSGQKGIQCF. A helical membrane pass occupies residues 640 to 659; it reads LVVVALLCVPWMLLFKPLVL. The Cytoplasmic segment spans residues 660-725; sequence RRQYLRRKHL…DTMVHQAIHT (66 aa). A helical membrane pass occupies residues 726–750; the sequence is IEYCLGCISNTASYLRLWALSLAHA. The Vacuolar portion of the chain corresponds to 751–771; it reads QLSEVLWTMVIHIGLKVKSLA. A helical membrane pass occupies residues 772–810; that stretch reads GGLALFFIFAAFATLTVAILLIMEGLSAFLHALRLHWVE. The Cytoplasmic segment spans residues 811 to 838; the sequence is FQNKFYSGTGFKFLPFSFEHIREGKFDD.

This sequence belongs to the V-ATPase 116 kDa subunit family. V-ATPase is a heteromultimeric enzyme made up of two complexes: the ATP-hydrolytic V1 complex and the proton translocation V0 complex. The V1 complex consists of three catalytic AB heterodimers that form a heterohexamer, three peripheral stalks each consisting of EG heterodimers, one central rotor including subunits D and F, and the regulatory subunits C and H. The proton translocation complex V0 consists of the proton transport subunit a, a ring of proteolipid subunits c9c'', rotary subunit d, subunits e and f, and the accessory subunits ATP6AP1/Ac45 and ATP6AP2/PRR. Interacts with SPAAR. In terms of tissue distribution, expressed in brain (at protein level). Expressed heart, kidney, liver, spleen, and to a lesser extent in brain.

Its subcellular location is the cytoplasmic vesicle. It is found in the clathrin-coated vesicle membrane. The protein localises to the secretory vesicle. It localises to the synaptic vesicle membrane. The protein resides in the melanosome. In terms of biological role, subunit of the V0 complex of vacuolar(H+)-ATPase (V-ATPase), a multisubunit enzyme composed of a peripheral complex (V1) that hydrolyzes ATP and a membrane integral complex (V0) that translocates protons. V-ATPase is responsible for the acidification of various organelles, such as lysosomes, endosomes, the trans-Golgi network, and secretory granules, including synaptic vesicles. In certain cell types, can be exported to the plasma membrane, where it is involved in the acidification of the extracellular environment. Required for assembly and activity of the vacuolar ATPase. Through its action on compartment acidification, plays an essential role in neuronal development in terms of integrity and connectivity of neurons. The polypeptide is V-type proton ATPase 116 kDa subunit a 1 (ATP6V0A1) (Bos taurus (Bovine)).